Consider the following 944-residue polypeptide: Protein unc-45 homolog A (944 aa).

Positions 1-25 (MTVSGPETPEPRPSDPGASSAEQLR) are disordered. TPR repeat units lie at residues 21 to 54 (AEQL…GATP), 58 to 91 (AILH…DGGD), and 92 to 125 (VKAL…EPKN). Lys70 is modified (N6-acetyllysine). Position 483 is an N6-acetyllysine (Lys483).

Interacts with PGR isoforms A and B as well as with NR3C1 in the absence of ligand, and with HSP90AB1. Binding to HSP90AB1 involves 2 UNC45A monomers per HSP90AB1 dimer. As to expression, detected in spleen, bone marrow, lung and ovary, and at lower levels in testis, kidney, heart and brain (at protein level). Ubiquitous. Detected in uterus, large intestine, kidney, spleen, lung, brain, liver and ovary.

It is found in the cytoplasm. It localises to the perinuclear region. The protein resides in the nucleus. Its function is as follows. May act as co-chaperone for HSP90 (Potential). Prevents the stimulation of HSP90AB1 ATPase activity by AHSA1. Positive factor in promoting PGR function in the cell. May be necessary for proper folding of myosin (Potential). Necessary for normal cell proliferation. Necessary for normal myotube formation and myosin accumulation during muscle cell development. May play a role in erythropoiesis in stroma cells in the spleen. This is Protein unc-45 homolog A (Unc45a) from Mus musculus (Mouse).